A 192-amino-acid polypeptide reads, in one-letter code: Probable cobalt-precorrin-6B C(15)-methyltransferase (decarboxylating) (192 aa).

S-adenosyl-L-methionine contacts are provided by residues T17, 41 to 45 (GCGTG), D62, and A91.

Belongs to the methyltransferase superfamily. Archaeal-type CbiT family. In terms of assembly, homotetramer.

The enzyme catalyses Co-precorrin-6B + S-adenosyl-L-methionine = Co-precorrin-7 + S-adenosyl-L-homocysteine + CO2. It functions in the pathway cofactor biosynthesis; adenosylcobalamin biosynthesis; cob(II)yrinate a,c-diamide from sirohydrochlorin (anaerobic route): step 8/10. Its function is as follows. Catalyzes the methylation of C-15 in cobalt-precorrin-6B followed by the decarboxylation of C-12 to form cobalt-precorrin-7. This is Probable cobalt-precorrin-6B C(15)-methyltransferase (decarboxylating) from Methanothermobacter thermautotrophicus (strain ATCC 29096 / DSM 1053 / JCM 10044 / NBRC 100330 / Delta H) (Methanobacterium thermoautotrophicum).